Reading from the N-terminus, the 255-residue chain is Small ribosomal subunit protein eS1 (255 aa).

Alanine 2 bears the N-acetylalanine; partial mark.

Belongs to the eukaryotic ribosomal protein eS1 family. Component of the small ribosomal subunit. Mature ribosomes consist of a small (40S) and a large (60S) subunit. The 40S subunit contains about 33 different proteins and 1 molecule of RNA (18S). The 60S subunit contains about 49 different proteins and 3 molecules of RNA (25S, 5.8S and 5S).

Its subcellular location is the cytoplasm. This is Small ribosomal subunit protein eS1 from Yarrowia lipolytica (strain CLIB 122 / E 150) (Yeast).